A 153-amino-acid polypeptide reads, in one-letter code: Lipoprotein signal peptidase (153 aa).

2 helical membrane passes run 61 to 81 (YFFVILTVLVIGAALFYLVKN) and 85 to 105 (SLWLVLSLILIISGGIGNFID). Catalysis depends on residues Asp-114 and Asp-130. A helical transmembrane segment spans residues 125 to 145 (IFNVADSYLTVGVLLLILILW).

This sequence belongs to the peptidase A8 family.

The protein localises to the cell membrane. The enzyme catalyses Release of signal peptides from bacterial membrane prolipoproteins. Hydrolyzes -Xaa-Yaa-Zaa-|-(S,diacylglyceryl)Cys-, in which Xaa is hydrophobic (preferably Leu), and Yaa (Ala or Ser) and Zaa (Gly or Ala) have small, neutral side chains.. Its pathway is protein modification; lipoprotein biosynthesis (signal peptide cleavage). Functionally, this protein specifically catalyzes the removal of signal peptides from prolipoproteins. The sequence is that of Lipoprotein signal peptidase from Streptococcus thermophilus (strain CNRZ 1066).